A 632-amino-acid polypeptide reads, in one-letter code: Golgin subfamily A member 8N (632 aa).

Positions 1-76 (MAEETQHNKL…TSSATLKDLE (76 aa)) are disordered. Over residues 38 to 50 (TNGSIPETATSGG) the composition is skewed to polar residues. Coiled-coil stretches lie at residues 85 to 150 (VLDS…TDLY) and 209 to 421 (ELEQ…SLMA). Disordered regions lie at residues 423–445 (PGEG…PMPS), 505–524 (DAAL…DEGE), and 552–573 (NSAD…ADKH). Positions 508–520 (LGGGHHQAGAQGG) are enriched in gly residues.

It belongs to the GOLGA8 family.

The sequence is that of Golgin subfamily A member 8N from Homo sapiens (Human).